We begin with the raw amino-acid sequence, 357 residues long: UDP-N-acetylglucosamine--N-acetylmuramyl-(pentapeptide) pyrophosphoryl-undecaprenol N-acetylglucosamine transferase (357 aa).

UDP-N-acetyl-alpha-D-glucosamine-binding positions include 14–16 (TGG), asparagine 128, arginine 169, serine 193, isoleucine 248, and glutamine 292.

This sequence belongs to the glycosyltransferase 28 family. MurG subfamily.

The protein localises to the cell inner membrane. It carries out the reaction di-trans,octa-cis-undecaprenyl diphospho-N-acetyl-alpha-D-muramoyl-L-alanyl-D-glutamyl-meso-2,6-diaminopimeloyl-D-alanyl-D-alanine + UDP-N-acetyl-alpha-D-glucosamine = di-trans,octa-cis-undecaprenyl diphospho-[N-acetyl-alpha-D-glucosaminyl-(1-&gt;4)]-N-acetyl-alpha-D-muramoyl-L-alanyl-D-glutamyl-meso-2,6-diaminopimeloyl-D-alanyl-D-alanine + UDP + H(+). It participates in cell wall biogenesis; peptidoglycan biosynthesis. Functionally, cell wall formation. Catalyzes the transfer of a GlcNAc subunit on undecaprenyl-pyrophosphoryl-MurNAc-pentapeptide (lipid intermediate I) to form undecaprenyl-pyrophosphoryl-MurNAc-(pentapeptide)GlcNAc (lipid intermediate II). This is UDP-N-acetylglucosamine--N-acetylmuramyl-(pentapeptide) pyrophosphoryl-undecaprenol N-acetylglucosamine transferase from Bdellovibrio bacteriovorus (strain ATCC 15356 / DSM 50701 / NCIMB 9529 / HD100).